Here is a 658-residue protein sequence, read N- to C-terminus: Zinc finger protein 135 (658 aa).

Residues 14-85 (VTFEDVVVGF…ESRLPQGVYP (72 aa)) form the KRAB domain. The interval 171–196 (LNPDLPHQPMTPERQSPHTWGTRGKR) is disordered. 16 C2H2-type zinc fingers span residues 214–236 (YKCQ…HRTH), 242–264 (YECH…QRIH), 270–292 (YKCT…QRTH), 298–320 (YECS…ERTH), 326–348 (YECS…LRIH), 354–376 (YQCG…QRIH), 382–404 (YECH…QRTH), 410–432 (YECG…RRIH), 438–460 (YGCN…ERTH), 466–488 (YECS…QRIH), 494–516 (YECN…QRIH), 522–544 (YECN…QRIH), 550–572 (YECN…QRIH), 578–600 (YGCN…ERTH), 606–628 (YECH…RRIH), and 634–656 (YACR…QRTH).

Belongs to the krueppel C2H2-type zinc-finger protein family.

Its subcellular location is the nucleus. Functionally, plays a role in the regulation of cell morphology and cytoskeletal organization. May be involved in transcriptional regulation. The protein is Zinc finger protein 135 (ZNF135) of Homo sapiens (Human).